The sequence spans 215 residues: MSGPDPETKMQFLFALRSKGVTDKRVLAAMEEVDRGLFVRGLFSGRAYEDMPLPIACGQTISQPSVVGLMTQALEVNPRDKVLEVGTGSGYQAAILAKLARRVYTVDRHARLVRAAQLVFQQLQLVNITTMTADGSFGLPDQAPFDRIIVTAAAEDAPGPLLAQLKIGGIMVLPVGQSDTVQTLIRVRRTEQGFDYDELRPVRFVPLLEGLGKDG.

Residue Ser62 is part of the active site.

Belongs to the methyltransferase superfamily. L-isoaspartyl/D-aspartyl protein methyltransferase family.

It is found in the cytoplasm. The enzyme catalyses [protein]-L-isoaspartate + S-adenosyl-L-methionine = [protein]-L-isoaspartate alpha-methyl ester + S-adenosyl-L-homocysteine. Catalyzes the methyl esterification of L-isoaspartyl residues in peptides and proteins that result from spontaneous decomposition of normal L-aspartyl and L-asparaginyl residues. It plays a role in the repair and/or degradation of damaged proteins. The protein is Protein-L-isoaspartate O-methyltransferase of Ruegeria pomeroyi (strain ATCC 700808 / DSM 15171 / DSS-3) (Silicibacter pomeroyi).